The chain runs to 1158 residues: cGMP-specific 3',5'-cyclic phosphodiesterase (1158 aa).

2 disordered regions span residues 1 to 137 (MTDV…SQHD) and 195 to 216 (SPTV…SIPE). Positions 30-71 (ATTSAAASASSSQAKPLTNGAKKAATAAAAAGAEEGGASASN) are enriched in low complexity. Residues 108–135 (GSTSKSSSIHTQTSQQERAGRPTSSASQ) show a composition bias toward polar residues. The segment covering 202 to 215 (SPRSLSNSSASSIP) has biased composition (low complexity). GAF domains follow at residues 242–394 (DIDV…GIGI) and 426–640 (NLEC…GLGI). A PDEase domain is found at 670–993 (SQDQTEKLTQ…RNWQDLAEKV (324 aa)). The Proton donor role is filled by His-746. A divalent metal cation is bound by residues His-750, His-786, Asp-787, and Asp-897. 2 disordered regions span residues 1034–1065 (QSQQ…TGAL) and 1097–1158 (VSED…CALL). The segment covering 1041–1052 (GSEDSHTPEHQR) has biased composition (basic and acidic residues). A compositionally biased stretch (low complexity) spans 1114–1130 (AAGSMGRMSASSSTSSA). Over residues 1148–1158 (SKKRSKLCALL) the composition is skewed to basic residues. Cysteine methyl ester is present on Cys-1155. A lipid anchor (S-farnesyl cysteine) is attached at Cys-1155. Residues 1156–1158 (ALL) constitute a propeptide, removed in mature form.

Belongs to the cyclic nucleotide phosphodiesterase family. As to quaternary structure, interacts with PrBP. Requires a divalent metal cation as cofactor.

The protein resides in the cell membrane. It carries out the reaction 3',5'-cyclic GMP + H2O = GMP + H(+). Has a role regulating cGMP transport in Malpighian tubule principal cells. This Drosophila ananassae (Fruit fly) protein is cGMP-specific 3',5'-cyclic phosphodiesterase.